The following is an 801-amino-acid chain: Triacylglycerol lipase SDP1L (801 aa).

Residue Asn130 is glycosylated (N-linked (GlcNAc...) asparagine). Transmembrane regions (helical) follow at residues 232-249 (ALLL…LGVV) and 261-277 (IIAG…VVGT). The PNPLA domain maps to 233-436 (LLLSGGASLG…EMDLPMIQLK (204 aa)). The GXSXG motif lies at 264 to 268 (GSSVG). Ser266 acts as the Nucleophile in catalysis. N-linked (GlcNAc...) asparagine glycans are attached at residues Asn328 and Asn332. Asp423 functions as the Proton acceptor in the catalytic mechanism. 6 N-linked (GlcNAc...) asparagine glycosylation sites follow: Asn605, Asn620, Asn649, Asn653, Asn708, and Asn759. The tract at residues 648–675 (SNRTSNLSHTYDAGSECDSPEAEDWTRS) is disordered. Residues 750 to 801 (MNSEPEDSQNESEIPETPESVQLDSPEKDIIDGESSASEDGDAQANLIHDHE) form a disordered region. A compositionally biased stretch (acidic residues) spans 753-765 (EPEDSQNESEIPE).

As to expression, highly expressed in mature pollen.

It is found in the lipid droplet. It localises to the membrane. It carries out the reaction a triacylglycerol + H2O = a diacylglycerol + a fatty acid + H(+). In terms of biological role, may be involved in the release of fatty acids from the oil body in germinating seedlings. Can hydrolyze triacylglycerols in vitro. The sequence is that of Triacylglycerol lipase SDP1L from Arabidopsis thaliana (Mouse-ear cress).